The following is a 70-amino-acid chain: UPF0270 protein VS_2853 (70 aa).

It belongs to the UPF0270 family.

The polypeptide is UPF0270 protein VS_2853 (Vibrio atlanticus (strain LGP32) (Vibrio splendidus (strain Mel32))).